A 105-amino-acid chain; its full sequence is Small ribosomal subunit protein uS10 (105 aa).

It belongs to the universal ribosomal protein uS10 family. In terms of assembly, part of the 30S ribosomal subunit.

Involved in the binding of tRNA to the ribosomes. The chain is Small ribosomal subunit protein uS10 from Synechococcus sp. (strain JA-2-3B'a(2-13)) (Cyanobacteria bacterium Yellowstone B-Prime).